A 210-amino-acid polypeptide reads, in one-letter code: N-(5'-phosphoribosyl)anthranilate isomerase (210 aa).

It belongs to the TrpF family.

It carries out the reaction N-(5-phospho-beta-D-ribosyl)anthranilate = 1-(2-carboxyphenylamino)-1-deoxy-D-ribulose 5-phosphate. It participates in amino-acid biosynthesis; L-tryptophan biosynthesis; L-tryptophan from chorismate: step 3/5. The polypeptide is N-(5'-phosphoribosyl)anthranilate isomerase (Trichormus variabilis (strain ATCC 29413 / PCC 7937) (Anabaena variabilis)).